The chain runs to 232 residues: MPKHSKRYNEVRKLVDRTKEYDLNEAVDLAKKVATAKFDETVELHIKTNIDYRKSDQQIRSTISLPHGTGKEVRVLVFAKGEKAEEAKKAGADYVGAEDLAEKIQKEGFLDFDVAIATPDMMKIIGRLGKILGPRGLMPNPKAGTVTNDVAAAVKDFKKGRMEIRTDKTGNLHIPVGKASFEKEKLTENIKSAYEQVLNLKPTGVKGTFIKKVVLSTTMGPGIKVNPATLTQ.

The protein belongs to the universal ribosomal protein uL1 family. In terms of assembly, part of the 50S ribosomal subunit.

Binds directly to 23S rRNA. The L1 stalk is quite mobile in the ribosome, and is involved in E site tRNA release. Its function is as follows. Protein L1 is also a translational repressor protein, it controls the translation of the L11 operon by binding to its mRNA. The chain is Large ribosomal subunit protein uL1 from Thermosipho melanesiensis (strain DSM 12029 / CIP 104789 / BI429).